The following is a 183-amino-acid chain: MKKKTTLSEEDQALFRQLMAGTRKIKQDTIVHRPQRKKISEVPVKRLIQEQADASHYFSDEFQPLLNTEGPVKYVRPDVSHFEAKKLRRGDYSPELFLDLHGLTQLQAKQELGALIAACRREHVFCACVMHGHGKHILKQQTPLWLAQHPHVMAFHQAPKEYGGDAALLVLIEVEEWLPPELT.

A Smr domain is found at 98 to 173 (LDLHGLTQLQ…GDAALLVLIE (76 aa)).

The protein belongs to the SmrB family. As to quaternary structure, associates with collided ribosomes, but not with correctly translating polysomes.

Functionally, acts as a ribosome collision sensor. Detects stalled/collided disomes (pairs of ribosomes where the leading ribosome is stalled and a second ribosome has collided with it) and endonucleolytically cleaves mRNA at the 5' boundary of the stalled ribosome. Stalled/collided disomes form a new interface (primarily via the 30S subunits) that binds SmrB. Cleaved mRNA becomes available for tmRNA ligation, leading to ribosomal subunit dissociation and rescue of stalled ribosomes. The sequence is that of Ribosome rescue factor SmrB from Escherichia coli (strain 55989 / EAEC).